We begin with the raw amino-acid sequence, 250 residues long: tRNA (guanine-N(1)-)-methyltransferase (250 aa).

S-adenosyl-L-methionine is bound by residues Gly-116 and Ile-136–Leu-141.

It belongs to the RNA methyltransferase TrmD family. In terms of assembly, homodimer.

The protein resides in the cytoplasm. It catalyses the reaction guanosine(37) in tRNA + S-adenosyl-L-methionine = N(1)-methylguanosine(37) in tRNA + S-adenosyl-L-homocysteine + H(+). In terms of biological role, specifically methylates guanosine-37 in various tRNAs. This chain is tRNA (guanine-N(1)-)-methyltransferase, found in Pseudomonas syringae pv. tomato (strain ATCC BAA-871 / DC3000).